Reading from the N-terminus, the 1266-residue chain is Rho GTPase-activating protein 29 (1266 aa).

Ser171, Ser176, Ser179, and Ser190 each carry phosphoserine. One can recognise an F-BAR domain in the interval 192-462; it reads IELDNLLLKN…SAKLYDPGQE (271 aa). Residues 296–418 are a coiled coil; that stretch reads RKNEMEKQRK…EILTQLRTLV (123 aa). The tract at residues 482 to 501 is disordered; sequence NVNKQMTNSPQTSGYEPADS. Over residues 483–495 the composition is skewed to polar residues; that stretch reads VNKQMTNSPQTSG. Phosphoserine occurs at positions 501, 521, and 554. Over residues 542-561 the composition is skewed to low complexity; sequence DSESTGGSSESRSLDSESIS. Positions 542–601 are disordered; the sequence is DSESTGGSSESRSLDSESISPGDFHRKLPRTPSSGTMSSADDLDEREPPSPSEAGPNSLG. The Phorbol-ester/DAG-type zinc-finger motif lies at 614-659; the sequence is THKFRKLRSPTKCRDCDGIVMFPGVECEECLLVCHRKCLENLVIIC. Residues 673–888 enclose the Rho-GAP domain; sequence AEFIQVAKKE…FLITYSQKIF (216 aa). Ser920, Ser956, and Ser1028 each carry phosphoserine. Disordered stretches follow at residues 1039-1081, 1116-1157, and 1209-1266; these read SSPT…KVNG, GLTV…ATAV, and KSDP…PQFV. Polar residues predominate over residues 1072–1081; that stretch reads SNTTRSKVNG. A compositionally biased stretch (basic and acidic residues) spans 1124 to 1136; it reads NRDHPGSKAHAEP. A phosphoserine mark is found at Ser1149 and Ser1151. The span at 1256-1266 shows a compositional bias: acidic residues; the sequence is EDLEDEIPQFV. The interaction with PTPN13/PTPL1 stretch occupies residues 1263 to 1266; sequence PQFV.

Interacts with PTPN13/PTPL1. Interacts with RAP2A via its coiled coil domain. Interacts with RASIP1.

Its function is as follows. GTPase activator for the Rho-type GTPases by converting them to an inactive GDP-bound state. Has strong activity toward RHOA, and weaker activity toward RAC1 and CDC42. May act as a specific effector of RAP2A to regulate Rho. In concert with RASIP1, suppresses RhoA signaling and dampens ROCK and MYH9 activities in endothelial cells and plays an essential role in blood vessel tubulogenesis. This Mus musculus (Mouse) protein is Rho GTPase-activating protein 29 (Arhgap29).